The sequence spans 1826 residues: ATPase family AAA domain-containing protein 5 (1826 aa).

Phosphoserine is present on S44. K127 is covalently cross-linked (Glycyl lysine isopeptide (Lys-Gly) (interchain with G-Cter in SUMO2)). Disordered regions lie at residues 170 to 254 (SIED…KRAD), 282 to 311 (PAVP…CEPS), 323 to 367 (AQVH…RKSN), 398 to 572 (QQFM…EPGS), 588 to 623 (RSCS…ARTS), 647 to 684 (KFTR…TSKN), and 709 to 729 (VVPL…KSPE). S215 bears the Phosphoserine mark. The segment covering 243–254 (NDSRTHATKRAD) has biased composition (basic and acidic residues). Over residues 298–311 (SGSEGELSGSCEPS) the composition is skewed to low complexity. Phosphoserine occurs at positions 351 and 366. The interval 365-381 (KSNVVIQEGQLELAVLE) is interaction with WDR48. The span at 418 to 442 (KPLEKQKDPSEKSVHEGDSSSEKII) shows a compositional bias: basic and acidic residues. Over residues 445-456 (PNIQRVSSQGCL) the composition is skewed to polar residues. The span at 459 to 468 (HADRGSFPKE) shows a compositional bias: basic and acidic residues. Residues 469–481 (KSKKPNKKGKKTR) are compositionally biased toward basic residues. Over residues 487 to 505 (NREENIQKEKTAFSLKDEQ) the composition is skewed to basic and acidic residues. Residues 540 to 559 (DSVQMSLCNRNKSRSSSTPT) are compositionally biased toward polar residues. Phosphoserine is present on residues S591 and S603. A phosphoserine mark is found at S727 and S801. The disordered stretch occupies residues 965 to 1034 (GKQASPQLQP…NLDPSRDSGT (70 aa)). The segment covering 1006-1019 (EEMKGRSKDLDERI) has biased composition (basic and acidic residues). Position 1104 is a phosphoserine (S1104). 1119–1126 (GPTGVGKT) contacts ATP. Positions 1183–1216 (YNIGKSPKKLNSPGKVVTSPRKLPPSSPKTSGQK) are disordered. The LXCXE motif motif lies at 1415–1419 (LVCSE). Disordered regions lie at residues 1527 to 1552 (PASM…RKQK) and 1592 to 1611 (SNPE…VPQP). Residues 1612 to 1701 (PKTLAEKKCC…ATAEALSFTE (90 aa)) are interaction with RAD51 and RFC5.

It belongs to the AAA ATPase family. In terms of assembly, component of a heteropentameric replication factor ATAD5 RFC-like complex composed of one large subunit (ATAD5) and four small subunits (RFC2, RFC3, RFC4 and RFC5). Within the ATAD5 RFC-like complex, interacts with RFC2, RFC4 and RFC5. Within the ATAD5 RFC-like complex, interacts directly via-N terminal with RAD51; the interactions is enhanced under replication stress. Interacts with RB1 predominantly in G1 phase via its LXCXE motif. Interacts with RAD9A in growing cells. The interaction with RAD9A is reduced after exposure to DNA replication-inhibiting agents. Interacts with BRD4. Interacts with PCNA. Interacts with deubiquitinating enzyme USP1, and its associated factor, WDR48. Post-translationally, ATR may stimulate the RAD9A dissociation. As to expression, expressed ubiquitously in all cell lines like teratocarcinoma, cell lymphoma, lymphoma.

The protein localises to the nucleus. Has an important role in DNA replication and in maintaining genome integrity during replication stress. Involved in a RAD9A-related damage checkpoint, a pathway that is important in determining whether DNA damage is compatible with cell survival or whether it requires cell elimination by apoptosis. Modulates the RAD9A interaction with BCL2 and thereby induces DNA damage-induced apoptosis. Promotes PCNA deubiquitination by recruiting the ubiquitin-specific protease 1 (USP1) and WDR48 thereby down-regulating the error-prone damage bypass pathway. As component of the ATAD5 RFC-like complex, regulates the function of the DNA polymerase processivity factor PCNA by unloading the ring-shaped PCNA homotrimer from DNA after replication during the S phase of the cell cycle. This seems to be dependent on its ATPase activity. Plays important roles in restarting stalled replication forks under replication stress, by unloading the PCNA homotrimer from DNA and recruiting RAD51 possibly through an ATR-dependent manner. Ultimately this enables replication fork regression, breakage, and eventual fork restart. Both the PCNA unloading activity and the interaction with WDR48 are required to efficiently recruit RAD51 to stalled replication forks. Promotes the generation of MUS81-mediated single-stranded DNA-associated breaks in response to replication stress, which is an alternative pathway to restart stalled/regressed replication forks. This is ATPase family AAA domain-containing protein 5 (Atad5) from Mus musculus (Mouse).